Reading from the N-terminus, the 75-residue chain is Phytosulfokines 3 (75 aa).

The N-terminal stretch at 1–22 is a signal peptide; it reads MSPKVIAICLVALLLPISISHG. Residues 23-66 constitute a propeptide that is removed on maturation; sequence GRIGPIEPSKASSKVVERGNYDGRVEGCEEDDCLVERLLVAHLD. A sulfotyrosine mark is found at Y67 and Y69. The propeptide occupies 72–75; sequence GKHN.

Belongs to the phytosulfokine family. Sulfation is important for activity and for the binding to a putative membrane receptor. Post-translationally, PSK-alpha is produced by endopeptidase digestion. PSK-beta is produced from PSK-alpha by exopeptidase digestion.

The protein resides in the secreted. Functionally, promotes plant cell differentiation, organogenesis and somatic embryogenesis as well as cell proliferation. The chain is Phytosulfokines 3 (PSK3) from Oryza sativa subsp. japonica (Rice).